The chain runs to 148 residues: uncharacterized protein (148 aa).

Disordered stretches follow at residues 1–86 (MCPP…VQSP) and 122–148 (RAHR…TSPC). Residues 38-57 (RPPKMQRRPRPPVAKRRRFP) show a composition bias toward basic residues. Residues 134–148 (QSRQRPSPDSQTSPC) show a composition bias toward polar residues.

Belongs to the Epstein-Barr virus BLLF2 family.

This is an uncharacterized protein from Homo sapiens (Human).